The primary structure comprises 687 residues: MTAQSLLQTTLFLLSLLFLVQGAHGRGHREDFRFCSQRNQTHRSSLHYKPTPDLRISIENSEEALTVHAPFPAAHPASQSFPDPRGLYHFCLYWNRHAGRLHLLYGKRDFLLSDKASSLLCFQHQEESLAQGPPLLATSVTSWWSPQNISLPSAASFTFSFHSPPHTAAHNASVDMCELKRDLQLLSQFLKHPQKASRRPSAAPASQQLQSLESKLTSVRFMGDTVSFEEDRINATVWKLQPTAGLQDLHIHSRQEEEQSEILEYSVLLPRTLFQRTKGRRGEAEKRLLLVDFSSQALFQDKNSSQVLGEKVLGIVVQNTKVDNLTEPVVLTFQHQLQPKNVTLQCVFWVEDPTLSSPGHWSSAGCETVRRETQTSCLCNHLTYFAVLMVSSVEVDAVHKHYLSLLSYVGCVVSALACVVTIAAYLCSRRKPRDYTIKVHMNLLLAVFLLDTSFLLSEPVALTGSEAGCRASAIFLHFSLLACLSWMGLEGYNLYRLVVEVFGTYVPGYLLKLSAMGWGFPIFLVTLVALVDVDNYGPIILAVHRTPEGVIYPSMCWIRDSLVSYITNLGLFSLVFLFNMAMLATMVVQILRLRPHTQKWSHVLTLLGLSLVLGLPWALIFFSFASGTFQLVILYLFSIITSFQGFLIFIWYWSMRLQARGGPSPLKSNSDSARLPISSGSTSSSRI.

Residues 1-25 form the signal peptide; the sequence is MTAQSLLQTTLFLLSLLFLVQGAHG. 26 to 33 provides a ligand contact to heparin; sequence RGHREDFR. Over 26-402 the chain is Extracellular; the sequence is RGHREDFRFC…VEVDAVHKHY (377 aa). 2 disulfides stabilise this stretch: Cys-35/Cys-91 and Cys-121/Cys-177. 3 N-linked (GlcNAc...) asparagine glycosylation sites follow: Asn-39, Asn-148, and Asn-171. 190–200 is a heparin binding site; it reads LKHPQKASRRP. The 172-residue stretch at 224-395 folds into the GAIN-B domain; sequence DTVSFEEDRI…AVLMVSSVEV (172 aa). Asn-234, Asn-303, Asn-324, and Asn-341 each carry an N-linked (GlcNAc...) asparagine glycan. 2 disulfide bridges follow: Cys-346/Cys-377 and Cys-366/Cys-379. Positions 346–395 are GPS; sequence CVFWVEDPTLSSPGHWSSAGCETVRRETQTSCLCNHLTYFAVLMVSSVEV. Positions 384-397 are stachel; sequence YFAVLMVSSVEVDA. The chain crosses the membrane as a helical span at residues 403 to 423; the sequence is LSLLSYVGCVVSALACVVTIA. At 424–442 the chain is on the cytoplasmic side; the sequence is AYLCSRRKPRDYTIKVHMN. A helical transmembrane segment spans residues 443 to 463; that stretch reads LLLAVFLLDTSFLLSEPVALT. The Extracellular portion of the chain corresponds to 464 to 470; that stretch reads GSEAGCR. A helical transmembrane segment spans residues 471-491; sequence ASAIFLHFSLLACLSWMGLEG. Topologically, residues 492 to 512 are cytoplasmic; that stretch reads YNLYRLVVEVFGTYVPGYLLK. The chain crosses the membrane as a helical span at residues 513-533; sequence LSAMGWGFPIFLVTLVALVDV. Residues 534 to 570 are Extracellular-facing; sequence DNYGPIILAVHRTPEGVIYPSMCWIRDSLVSYITNLG. The chain crosses the membrane as a helical span at residues 571 to 591; it reads LFSLVFLFNMAMLATMVVQIL. The Cytoplasmic segment spans residues 592–603; that stretch reads RLRPHTQKWSHV. The chain crosses the membrane as a helical span at residues 604–624; it reads LTLLGLSLVLGLPWALIFFSF. At 625–630 the chain is on the extracellular side; the sequence is ASGTFQ. The helical transmembrane segment at 631-651 threads the bilayer; sequence LVILYLFSIITSFQGFLIFIW. Over 652–687 the chain is Cytoplasmic; it reads YWSMRLQARGGPSPLKSNSDSARLPISSGSTSSSRI. Residues 664-687 are disordered; that stretch reads SPLKSNSDSARLPISSGSTSSSRI. The segment covering 678–687 has biased composition (low complexity); the sequence is SSGSTSSSRI.

Belongs to the G-protein coupled receptor 2 family. LN-TM7 subfamily. As to quaternary structure, heterodimer of 2 chains generated by proteolytic processing; the large extracellular N-terminal fragment (ADGRG1 NT) and the membrane-bound C-terminal fragment (ADGRG1-CT) predominantly remain associated and non-covalently linked. ADGRG1 NT self-associates in a trans-trans manner; the homophilic interaction enhances receptor signaling. Interacts with TGM2. Interacts with heparin; leading to the reduction of ADGRG1 shedding. Interacts with COL3A1. Part of a GPCR-tetraspanin complex at least consisting of ADGRG1, CD81, eventually CD9, and GNA11 in which CD81 is enhancing the association of ADGRG1 with GNA11. In terms of processing, autoproteolytically cleaved into 2 fragments; the large extracellular N-terminal fragment (ADGRG1 NT) and the membrane-bound C-terminal fragment (ADGRG1 CT) predominantly remain associated and non-covalently linked. Shedding to yield the secreted ADGRG1 N-terminal fragment seems to involve metalloprotease(s). Post-translationally, ubiquitinated. Undergoes polyubiquitination upon activation.

The protein localises to the cell membrane. The protein resides in the secreted. Its subcellular location is the membrane raft. Forms a heterodimer of 2 chains generated by proteolytic processing that remain associated through non-covalent interactions mediated by the GAIN-B domain. In the inactivated receptor, the Stachel sequence (also named stalk) is embedded in the GAIN-B domain, where it adopts a beta-strand conformation. On activation, the Stachel moves into the 7 transmembrane region and adopts a twisted hook-shaped configuration that forms contacts within the receptor, leading to coupling of a G-alpha protein, which activates signaling. The cleaved GAIN-B and N-terminal domains can then dissociate from the rest of the receptor. Its function is as follows. Adhesion G-protein coupled receptor (aGPCR) for steroid hormone 17alpha-hydroxypregnenolone (17-OH), which is involved in cell adhesion and cell-cell interactions. Ligand binding causes a conformation change that triggers signaling via guanine nucleotide-binding proteins (G proteins) and modulates the activity of downstream effectors, such as RhoA pathway. ADGRG1 is coupled to G(12) and/or G(13) G proteins (GNA12 and GNA13, respectively) and mediates the activation Rho small GTPases. Acts as a potent suppressor of ferroptosis: binding to 17-OH-binding initiates signaling that down-regulates CD36 and alleviates ferroptosis-induced liver injury. Ligand-binding also induces cell adhesion activity via association with proteins such as collagen III/COL3A1 and TGM2. Mediates cell matrix adhesion in developing neurons and hematopoietic stem cells. Involved in cortical development, specifically in maintenance of the pial basement membrane integrity and in cortical lamination: association with COL3A1 in the developing brain inhibits neuronal migration via activation of the RhoA pathway. Together with TGM2, acts as a regulator of myelination and myelin repair in oligodendrocyte precursor cells. Acts as a hemostatic sensor of shear force: G protein-coupled receptor signaling is activated in response to shear force in platelets, promoting G(13) G protein signaling, and platelet shape change and aggregation in a COL3A1-dependent manner. Acts as an inhibitor of VEGFA production thereby inhibiting angiogenesis through a signaling pathway mediated by PRKCA. Plays a role in the maintenance of hematopoietic stem cells in bone marrow niche. Plays an essential role in testis development. This chain is Adhesion G-protein coupled receptor G1 (ADGRG1), found in Pan troglodytes (Chimpanzee).